We begin with the raw amino-acid sequence, 158 residues long: Low molecular weight phosphotyrosine protein phosphatase (158 aa).

An N-acetylalanine modification is found at alanine 2. The active-site Nucleophile is the cysteine 13. The active site involves arginine 19. The active-site Proton donor is aspartate 130. Residues tyrosine 132 and tyrosine 133 each carry the phosphotyrosine modification.

The protein belongs to the low molecular weight phosphotyrosine protein phosphatase family. Interacts with EPHA2; dephosphorylates EPHA2. Interacts with EPHB1. As to quaternary structure, interacts with the SH3 domain of SPTAN1. There is no interaction observed for isoforms 2 or 3. In terms of processing, phosphorylated by LCK. Phosphorylation at Tyr-132 increases its phosphatase activity. Not phosphorylated. In terms of tissue distribution, expressed in T-lymphocytes.

Its subcellular location is the cytoplasm. The enzyme catalyses O-phospho-L-tyrosyl-[protein] + H2O = L-tyrosyl-[protein] + phosphate. It catalyses the reaction a phosphate monoester + H2O = an alcohol + phosphate. With respect to regulation, inhibited by sulfhydryl reagents. Functionally, acts on tyrosine phosphorylated proteins, low-MW aryl phosphates and natural and synthetic acyl phosphates with differences in substrate specificity between isoform 1 and isoform 2. Its function is as follows. Does not possess phosphatase activity. The sequence is that of Low molecular weight phosphotyrosine protein phosphatase from Homo sapiens (Human).